A 375-amino-acid chain; its full sequence is Actin, cytoplasmic (375 aa).

Belongs to the actin family.

The protein resides in the cytoplasm. The protein localises to the cytoskeleton. It catalyses the reaction ATP + H2O = ADP + phosphate + H(+). In terms of biological role, actins are highly conserved proteins that are involved in various types of cell motility and are ubiquitously expressed in all eukaryotic cells. This Sterkiella nova (Ciliate) protein is Actin, cytoplasmic.